Here is an 839-residue protein sequence, read N- to C-terminus: Toll-like receptor 4 (839 aa).

The signal sequence occupies residues 1–23; sequence MMSASRLAGTLIPAMAFLSCVRP. The Extracellular portion of the chain corresponds to 24–631; it reads ESWEPCVEVV…SLNITCQMNK (608 aa). A disulfide bond links C29 and C40. A glycan (N-linked (GlcNAc...) asparagine) is linked at N35. 5 LRR repeats span residues 55–76, 79–100, 103–124, 127–148, and 151–172; these read STKN…SFFS, ELQV…AYQS, HLST…AFSG, SLQK…PIGH, and TLKE…EYFS. A glycan (N-linked (GlcNAc...) asparagine) is linked at N173. LRR repeat units follow at residues 176–199, 205–225, and 227–247; these read NLEH…RVLH, NLSL…AFKE, and RLHK…KTCI. N-linked (GlcNAc...) asparagine glycosylation occurs at N205. C281 and C306 are joined by a disulfide. N-linked (GlcNAc...) asparagine glycosylation is found at N282 and N309. LRR repeat units follow at residues 331–351, 352–373, 374–394, 400–422, 423–444, 448–456, 472–495, 497–518, 521–542, and 545–565; these read GWQH…LKLK, SLKR…VDLP, SLEF…CSQS, SLKY…LGLE, QLEH…SVFL, NLIYLDISH, SLEV…FTEL, NLTF…AFNS, SLQV…PYKC, and SLQV…QELQ. C390 and C391 form a disulfide bridge. N-linked (GlcNAc...) asparagine glycosylation is found at N497 and N526. A glycan (N-linked (GlcNAc...) asparagine) is linked at N575. Residues 579–629 enclose the LRRCT domain; that stretch reads NDFACTCEHQSFLQWIKDQRQLLVEVERMECATPSDKQGMPVLSLNITCQM. 2 cysteine pairs are disulfide-bonded: C583–C609 and C585–C627. Residues N624 and N630 are each glycosylated (N-linked (GlcNAc...) asparagine). Residues 632–652 traverse the membrane as a helical segment; that stretch reads TIIGVSVLSVLVVSVVAVLVY. The Cytoplasmic segment spans residues 653-839; that stretch reads KFYFHLMLLA…GCNWQEATSI (187 aa). A TIR domain is found at 672–815; sequence NIYDAFVIYS…IFWRRLRKAL (144 aa).

Belongs to the Toll-like receptor family. As to quaternary structure, belongs to the lipopolysaccharide (LPS) receptor, a multi-protein complex containing at least CD14, LY96 and TLR4. Binding to bacterial LPS leads to homodimerization. Interacts with LY96 via the extracellular domain. Interacts with MYD88. Interacts (via TIR domains) with TIRAP. Interacts with TICAM2. Interacts with NOX4. Interacts with CNPY3. Interacts with HSP90B1. The interaction with both CNPY3 and HSP90B1 is required for proper folding in the endoplasmic reticulum. Interacts with MAP3K21; this interaction leads to negative regulation of TLR4 signaling. Interacts with CD36, following CD36 stimulation by oxLDL or amyloid-beta 42, and forms a heterodimer with TLR6. The trimeric complex is internalized and triggers inflammatory response. LYN kinase activity facilitates TLR4-TLR6 heterodimerization and signal initiation. Interacts with TICAM1 in response to LPS in a WDFY1-dependent manner. Interacts with WDFY1 in response to LPS. Interacts with SMPDL3B. Interacts with CEACAM1; upon lipopolysaccharide stimulation, forms a complex including TLR4 and the phosphorylated form of SYK and CEACAM1, which in turn, recruits PTPN6 that dephosphorylates SYK, reducing the production of reactive oxygen species (ROS) and lysosome disruption, which in turn, reduces the activity of the inflammasome. Interacts with RFTN1; the interaction occurs in response to lipopolysaccharide stimulation. Interacts with SCIMP; the interaction occurs in response to lipopolysaccharide stimulation and is enhanced by phosphorylation of SCIMP by LYN. This interaction facilitates the phosphorylation of TLR4 by LYN which elicits a selective cytokine response in macrophages. Interacts with TRAF3IP3. Interacts with TREM1; this interaction enhances TLR4-mediated inflammatory response. Interacts with ZG16B/PAUF. Interacts with CD82; this interaction inhibits TLR4-mediated signaling pathway. Interacts with neutrophil recruitment protein from Aedes aegypti saliva; the interaction probably promotes activation of canonical NF-kappa-B signaling in skin-resident macrophages and subsequent expression of neutrophil chemoattractants. In terms of assembly, (Microbial infection) In case of infection, interacts with uropathogenic E.coli protein TcpC. (Microbial infection) In case of infection, interacts with B.melitensis protein TcpB; TcpB abolishes the TLR4-TIRAP interaction in vitro. As to quaternary structure, (Microbial infection) Interacts with ebolavirus protein GP; this interaction leads to the production of proinflammatory cytokines and suppressor of cytokine signaling 1/SOCS1. N-Glycosylation of Asn-526 and Asn-575 by STT3A-containing OST-A complex is necessary for the expression of TLR4 on the cell surface and the LPS-response. Likewise, mutants lacking two or more of the other N-glycosylation sites were deficient in interaction with LPS. Post-translationally, phosphorylated on tyrosine residues by LYN after binding lipopolysaccharide. In terms of processing, ubiquitinated by RNF128 via 'Lys-28'-linked polyubiquitin chains, leading to proteasomal degradation. In terms of tissue distribution, highly expressed in placenta, spleen and peripheral blood leukocytes. Detected in monocytes, macrophages, dendritic cells and several types of T-cells. Expressed in pancreatic cancer cells but not in normal pancreatic cells (at protein level).

The protein localises to the cell membrane. Its subcellular location is the early endosome. The protein resides in the cell projection. It localises to the ruffle. In terms of biological role, transmembrane receptor that functions as a pattern recognition receptor recognizing pathogen- and damage-associated molecular patterns (PAMPs and DAMPs) to induce innate immune responses via downstream signaling pathways. At the plasma membrane, cooperates with LY96 to mediate the innate immune response to bacterial lipopolysaccharide (LPS). Also involved in LPS-independent inflammatory responses triggered by free fatty acids, such as palmitate, and Ni(2+). Mechanistically, acts via MYD88, TIRAP and TRAF6, leading to NF-kappa-B activation, cytokine secretion and the inflammatory response. Alternatively, CD14-mediated TLR4 internalization via endocytosis is associated with the initiation of a MYD88-independent signaling via the TICAM1-TBK1-IRF3 axis leading to type I interferon production. In addition to the secretion of proinflammatory cytokines, initiates the activation of NLRP3 inflammasome and formation of a positive feedback loop between autophagy and NF-kappa-B signaling cascade. In complex with TLR6, promotes inflammation in monocytes/macrophages by associating with TLR6 and the receptor CD86. Upon ligand binding, such as oxLDL or amyloid-beta 42, the TLR4:TLR6 complex is internalized and triggers inflammatory response, leading to NF-kappa-B-dependent production of CXCL1, CXCL2 and CCL9 cytokines, via MYD88 signaling pathway, and CCL5 cytokine, via TICAM1 signaling pathway. In myeloid dendritic cells, vesicular stomatitis virus glycoprotein G but not LPS promotes the activation of IRF7, leading to type I IFN production in a CD14-dependent manner. Required for the migration-promoting effects of ZG16B/PAUF on pancreatic cancer cells. The chain is Toll-like receptor 4 (TLR4) from Homo sapiens (Human).